The primary structure comprises 1451 residues: MIVLTLCLFLFLYSSVSCTSNNDCVQVNVTQLPGNENIIKDFLFQNFKEEGSLVVGGYYPTEVWYNCSTTQQTTAYKYFSNIHAFYFDMEAMENSTGNARGKPLLVHVHGNPVSIIVYISAYRDDVQFRPLLKHGLLCITKNDTVDYNSFTINQWRDICLGDDRKIPFSVVPTDNGTKLFGLEWNDDYVTAYISDESHRLNINNNWFNNVTLLYSRTSTATWQHSAAYVYQGVSNFTYYKLNKTAGLKSYELCEDYEYCTGYATNVFAPTSGGYIPDGFSFNNWFMLTNSSTFVSGRFVTNQPLLVNCLWPVPSFGVAAQEFCFEGAQFSQCNGVSLNNTVDVIRFNLNFTTDVQSGMGATVFSLNTTGGVILEISCYNDTVSESSFYSYGEIPFGVTDGPRYCYVLYNGTALKYLGTLPPSVKEIAISKWGHFYINGYNFFSTFPIDCIAFNLTTGASGAFWTIAYTSYTEALVQVENTAIKKVTYCNSHINNIKCSQLTANLQNGFYPVASSEVGLVNKSVVLLPSFYSHTSVNITIDLGMKRSVTVTIASPLSNITLPMQDNNIDVYCIRSNQFSVYVHSTCKSSLWDNNFNSACTDVLDATAVIKTGTCPFSFDKLNNYLTFNKFCLSLNPVGANCKLDVAARTRTNEQVFGSLYVIYEEGDNIVGVPSDNSGLHDLSVLHLDSCTDYNIYGRTGVGIIRKTNSTLLSGLYYTSLSGDLLGFKNVSDGVVYSVTPCDVSAQAAVIDGAIVGAMTSINSELLGLTHWTTTPNFYYYSIYNYTNVMNRGTAIDNDIDCEPIITYSNIGVCKNGALVFINVTHSDGDVQPISTGNVTIPTNFTISVQVEYIQVYTTPVSIDCARYVCNGNPRCNKLLTQYVSACQTIEQALAMGARLENMEIDSMLFVSENALKLASVEAFNSTENLDPIYKEWPNIGGSWLGGLKDILPSHNSKRKYRSAIEDLLFDKVVTSGLGTVDEDYKRSAGGYDIADLVCARYYNGIMVLPGVANDDKMTMYTASLTGGITLGALSGGAVAIPFAVAVQARLNYVALQTDVLNKNQQILANAFNQAIGNITQAFGKVNDAIHQTSKGLATVAKALAKVQDVVNTQGQALSHLTVQLQNNFQAISSSISDIYNRLDELSADAQVDRLITGRLTALNAFVSQTLTRQAEVRASRQLAKDKVNECVRSQSQRFGFCGNGTHLFSLANAAPNGMIFFHTVLLPTAYETVTAWSGICASDGSRTFGLVVEDVQLTLFRNLDEKFYLTPRTMYQPRVATSSDFVQIEGCDVLFVNGTVIELPSIIPDYIDINQTVQDILENFRPNWTVPELPLDIFHATYLNLTGEINDLEFRSEKLHNTTVELAILIDNINNTLVNLEWLNRIETYVKWPWYVWLLIGLVVIFCIPILLFCCCSTGCCGCIGCLGSCCHSICSRGQFESYEPIEKVHVH.

The first 31 residues, 1–31 (MIVLTLCLFLFLYSSVSCTSNNDCVQVNVTQ), serve as a signal peptide directing secretion. The S1 stretch occupies residues 32–779 (LPGNENIIKD…WTTTPNFYYY (748 aa)). At 32 to 1392 (LPGNENIIKD…NRIETYVKWP (1361 aa)) the chain is on the virion surface side. Residues 660 to 803 (VIYEEGDNIV…IDNDIDCEPI (144 aa)) form an interaction with host ANPEP region. Positions 780–1451 (SIYNYTNVMN…YEPIEKVHVH (672 aa)) are S2. The segment at 1024–1045 (TGGITLGALSGGAVAIPFAVAV) is fusion peptide. The interval 1039-1158 (IPFAVAVQAR…QVDRLITGRL (120 aa)) is heptad repeat 1 (HR1). 2 coiled-coil regions span residues 1106–1150 (QDVV…DAQV) and 1340–1382 (TYLN…LEWL). The interval 1307–1404 (PDYIDINQTV…VWLLIGLVVI (98 aa)) is heptad repeat 2 (HR2). The chain crosses the membrane as a helical span at residues 1393–1412 (WYVWLLIGLVVIFCIPILLF). The Intravirion segment spans residues 1413–1451 (CCCSTGCCGCIGCLGSCCHSICSRGQFESYEPIEKVHVH). The short motif at 1447–1451 (KVHVH) is the KxHxx element.

This sequence belongs to the alphacoronaviruses spike protein family. Homotrimer. During virus morphogenesis, found in a complex with M and HE proteins. Interacts with host ANPEP.

The protein resides in the virion membrane. The protein localises to the host endoplasmic reticulum-Golgi intermediate compartment membrane. Functionally, S1 region attaches the virion to the cell membrane by interacting with host ANPEP/aminopeptidase N, initiating the infection. Binding to the receptor probably induces conformational changes in the S glycoprotein unmasking the fusion peptide of S2 region and activating membranes fusion. S2 region belongs to the class I viral fusion protein. Under the current model, the protein has at least 3 conformational states: pre-fusion native state, pre-hairpin intermediate state, and post-fusion hairpin state. During viral and target cell membrane fusion, the coiled coil regions (heptad repeats) regions assume a trimer-of-hairpins structure, positioning the fusion peptide in close proximity to the C-terminal region of the ectodomain. The formation of this structure appears to drive apposition and subsequent fusion of viral and target cell membranes. The protein is Spike glycoprotein of Canine coronavirus (strain Insavc-1) (CCoV).